The following is a 117-amino-acid chain: cAMP-regulated phosphoprotein 19-A (117 aa).

Positions 1-37 (MSGENQETKAQEESSALEQKEIDDKVVSPEKSEEIKL) are enriched in basic and acidic residues. Positions 1–54 (MSGENQETKAQEESSALEQKEIDDKVVSPEKSEEIKLKARYPNLGPKPGGSDFL) are disordered. Serine 28 bears the Phosphoserine; by CDK2 mark. The residue at position 67 (serine 67) is a Phosphoserine; by GWL. Residues 78-117 (KNKQLPTAASDKTEVTGDHIPTPQDLPQRKPSLVASKLAG) form a disordered region. Threonine 99 carries the phosphothreonine; by CDK2 modification. Serine 109 is subject to Phosphoserine; by PKA.

The protein belongs to the endosulfine family. As to quaternary structure, interacts (when phosphorylated at Ser-67) with ppp2r2d. Phosphorylation at Ser-67 by gwl during mitosis is essential for interaction with ppp2r2d (PR55-delta) and subsequent inactivation of PP2A. Phosphorylated by PKA.

The protein resides in the cytoplasm. In terms of biological role, protein phosphatase inhibitor that specifically inhibits protein phosphatase 2A (PP2A) during mitosis. When phosphorylated at Ser-67 during mitosis, specifically interacts with ppp2r2d (PR55-delta) and inhibits its activity, leading to inactivation of PP2A, an essential condition to keep cyclin-B1-CDK1 activity high during M phase. In Xenopus laevis (African clawed frog), this protein is cAMP-regulated phosphoprotein 19-A (arpp19-a).